Here is a 65-residue protein sequence, read N- to C-terminus: Large ribosomal subunit protein bL33c (65 aa).

This sequence belongs to the bacterial ribosomal protein bL33 family.

It is found in the plastid. The protein resides in the chloroplast. This is Large ribosomal subunit protein bL33c from Pyropia yezoensis (Susabi-nori).